The chain runs to 619 residues: Chaperone protein HscA homolog (619 aa).

It belongs to the heat shock protein 70 family.

Chaperone involved in the maturation of iron-sulfur cluster-containing proteins. Has a low intrinsic ATPase activity which is markedly stimulated by HscB. This chain is Chaperone protein HscA homolog, found in Shewanella frigidimarina (strain NCIMB 400).